The following is a 310-amino-acid chain: AMMECR1-like protein (310 aa).

The tract at residues 26 to 95 is disordered; the sequence is LSGSGTHSHG…LSPLPRPNGT (70 aa). The segment covering 28–66 has biased composition (polar residues); it reads GSGTHSHGNQSTTVPGSSSGPLQNHQHVDSSSGRENVSD. S74 bears the Phosphoserine mark. Residues 97-291 enclose the AMMECR1 domain; sequence NTTKNLVVTA…ISYAEYIASR (195 aa).

The chain is AMMECR1-like protein (AMMECR1L) from Homo sapiens (Human).